Here is a 174-residue protein sequence, read N- to C-terminus: Dual-action ribosomal maturation protein DarP (174 aa).

The protein belongs to the DarP family.

The protein resides in the cytoplasm. In terms of biological role, member of a network of 50S ribosomal subunit biogenesis factors which assembles along the 30S-50S interface, preventing incorrect 23S rRNA structures from forming. Promotes peptidyl transferase center (PTC) maturation. In Vibrio campbellii (strain ATCC BAA-1116), this protein is Dual-action ribosomal maturation protein DarP.